We begin with the raw amino-acid sequence, 238 residues long: Probable transcriptional regulatory protein Sde_1551 (238 aa).

This sequence belongs to the TACO1 family.

The protein localises to the cytoplasm. The protein is Probable transcriptional regulatory protein Sde_1551 of Saccharophagus degradans (strain 2-40 / ATCC 43961 / DSM 17024).